Consider the following 1461-residue polypeptide: Phospholipid-transporting ATPase VB (1461 aa).

Residues 1 to 82 are Cytoplasmic-facing; the sequence is MALSVDSSWH…TTKYTLFTFL (82 aa). A helical membrane pass occupies residues 83 to 104; it reads PRNLFEQFHRWANLYFLFLVIL. Residues 105–110 lie on the Exoplasmic loop side of the membrane; sequence NWMPSM. The chain crosses the membrane as a helical span at residues 111 to 132; that stretch reads EVFHREITMLPLAIVLFVIMIK. Over 133-316 the chain is Cytoplasmic; the sequence is DGMEDFKRHR…SKIERRMNID (184 aa). A helical membrane pass occupies residues 317-338; sequence IFFCIGILILMCLIGAVGHSIW. At 339-368 the chain is on the exoplasmic loop side; the sequence is NGTFEEHPPFDVPDANGSFLPSALGGFYMF. Residues 369-390 form a helical membrane-spanning segment; it reads LTMIILLQVLIPISLYVSIELV. Residues 391 to 1111 are Cytoplasmic-facing; the sequence is KLGQVFFLSN…GHWCYSRLAR (721 aa). Asp433 acts as the 4-aspartylphosphate intermediate in catalysis. ATP contacts are provided by Asp433, Lys434, and Thr435. Asp433 contributes to the Mg(2+) binding site. Thr435 is a binding site for Mg(2+). Polar residues-rich tracts occupy residues 496–511 and 530–539; these read MRSQ…SQSA and SQPPVAFSSS. Disordered stretches follow at residues 496–541 and 640–687; these read MRSQ…SSIE and TAPS…MWDQ. 9 residues coordinate ATP: Glu724, Phe766, Lys790, Arg835, Thr915, Gly916, Asp917, Arg1029, and Lys1035. Mg(2+) is bound at residue Asp1055. The ATP site is built by Asn1058 and Asp1059. Asp1059 provides a ligand contact to Mg(2+). Residues 1112–1132 traverse the membrane as a helical segment; that stretch reads MVVYYLYKNVCYVNLLFWYQF. The Exoplasmic loop portion of the chain corresponds to 1133-1144; the sequence is FCGFSSSTMIDY. The chain crosses the membrane as a helical span at residues 1145 to 1164; sequence WQMIFFNLFFTSLPPLVFGV. Over 1165 to 1194 the chain is Cytoplasmic; the sequence is LDKDISAETLLALPELYKSGQNSECYNLST. A helical membrane pass occupies residues 1195-1216; that stretch reads FWISMVDAFYQSLICFFIPYLA. Over 1217 to 1223 the chain is Exoplasmic loop; it reads YKGSDID. A helical membrane pass occupies residues 1224–1246; the sequence is VFTFGTPINTISLTTILLHQAME. At 1247–1252 the chain is on the cytoplasmic side; that stretch reads MKTWTI. The chain crosses the membrane as a helical span at residues 1253-1273; sequence FHGVVLLGSFLMYFLVSLLYN. The Exoplasmic loop portion of the chain corresponds to 1274-1291; that stretch reads ATCVICNSPTNPYWVMEG. The helical transmembrane segment at 1292–1316 threads the bilayer; it reads QLSNPTFYLVCFLTPVVALLPRYFF. The Cytoplasmic segment spans residues 1317-1461; that stretch reads LSLQGTCGKS…HRRSQSSLTI (145 aa). Residues 1346 to 1397 are disordered; the sequence is IQSWRSRQRPAPVPEVARPTHHPVSSITGQDFSASTPKSSNPPKRKHVEESV. Over residues 1368 to 1387 the composition is skewed to polar residues; the sequence is PVSSITGQDFSASTPKSSNP.

Belongs to the cation transport ATPase (P-type) (TC 3.A.3) family. Type IV subfamily. Component of a P4-ATPase flippase complex which consists of a catalytic alpha subunit ATP10B and an accessory beta subunit TMEM30A. Requires Mg(2+) as cofactor. Autophosphorylated at the conserved aspartate of the P-type ATPase signature sequence. As to expression, expressed in predominantly in brain structures including medulla oblongata, substantia nigra and basal ganglia. Expressed in the gastrointestinal system with highest levels in the small intestine and colon. Also expressed at low levels in testis and thymus.

It localises to the late endosome membrane. It is found in the lysosome membrane. The protein localises to the endoplasmic reticulum membrane. The catalysed reaction is ATP + H2O + phospholipidSide 1 = ADP + phosphate + phospholipidSide 2.. It carries out the reaction a beta-D-glucosyl-(1&lt;-&gt;1')-N-acylsphing-4-enine(out) + ATP + H2O = a beta-D-glucosyl-(1&lt;-&gt;1')-N-acylsphing-4-enine(in) + ADP + phosphate + H(+). Functionally, catalytic component of a P4-ATPase flippase complex, which catalyzes the hydrolysis of ATP coupled to the transport of glucosylceramide (GlcCer) from the outer to the inner leaflet of lysosome membranes. Plays an important role in the maintenance of lysosome membrane integrity and function in cortical neurons. This is Phospholipid-transporting ATPase VB from Homo sapiens (Human).